Reading from the N-terminus, the 220-residue chain is Guanylate kinase (220 aa).

One can recognise a Guanylate kinase-like domain in the interval glycine 3–threonine 180. Glycine 10–glycine 17 provides a ligand contact to ATP.

This sequence belongs to the guanylate kinase family.

It localises to the cytoplasm. It catalyses the reaction GMP + ATP = GDP + ADP. Functionally, essential for recycling GMP and indirectly, cGMP. The protein is Guanylate kinase of Thermus thermophilus (strain ATCC BAA-163 / DSM 7039 / HB27).